A 319-amino-acid chain; its full sequence is Lipoyl synthase (319 aa).

Residues 1–24 (MAVVIDTVGARPRHPEKQANPDTP) form a disordered region. Over residues 13 to 24 (RHPEKQANPDTP) the composition is skewed to basic and acidic residues. Cys58, Cys63, Cys69, Cys84, Cys88, Cys91, and Ser298 together coordinate [4Fe-4S] cluster. The Radical SAM core domain occupies 70 to 287 (WDKSHATFMI…EEIARAKGFL (218 aa)).

The protein belongs to the radical SAM superfamily. Lipoyl synthase family. The cofactor is [4Fe-4S] cluster.

It is found in the cytoplasm. It carries out the reaction [[Fe-S] cluster scaffold protein carrying a second [4Fe-4S](2+) cluster] + N(6)-octanoyl-L-lysyl-[protein] + 2 oxidized [2Fe-2S]-[ferredoxin] + 2 S-adenosyl-L-methionine + 4 H(+) = [[Fe-S] cluster scaffold protein] + N(6)-[(R)-dihydrolipoyl]-L-lysyl-[protein] + 4 Fe(3+) + 2 hydrogen sulfide + 2 5'-deoxyadenosine + 2 L-methionine + 2 reduced [2Fe-2S]-[ferredoxin]. Its pathway is protein modification; protein lipoylation via endogenous pathway; protein N(6)-(lipoyl)lysine from octanoyl-[acyl-carrier-protein]: step 2/2. Functionally, catalyzes the radical-mediated insertion of two sulfur atoms into the C-6 and C-8 positions of the octanoyl moiety bound to the lipoyl domains of lipoate-dependent enzymes, thereby converting the octanoylated domains into lipoylated derivatives. This chain is Lipoyl synthase, found in Phenylobacterium zucineum (strain HLK1).